A 218-amino-acid polypeptide reads, in one-letter code: Small ribosomal subunit protein uS3c (218 aa).

The 76-residue stretch at 43 to 118 (IKNYVQKNMK…KLNISITRIE (76 aa)) folds into the KH type-2 domain.

The protein belongs to the universal ribosomal protein uS3 family. In terms of assembly, part of the 30S ribosomal subunit.

The protein localises to the plastid. Its subcellular location is the chloroplast. The chain is Small ribosomal subunit protein uS3c (rps3) from Populus alba (White poplar).